The chain runs to 37 residues: Large ribosomal subunit protein bL36 (37 aa).

The protein belongs to the bacterial ribosomal protein bL36 family.

The polypeptide is Large ribosomal subunit protein bL36 (Parasynechococcus marenigrum (strain WH8102)).